An 82-amino-acid polypeptide reads, in one-letter code: RNA-binding protein Hfq (82 aa).

The region spanning 11–72 (DTFLNAVRKS…ISTIAPSAPV (62 aa)) is the Sm domain.

It belongs to the Hfq family. Homohexamer.

RNA chaperone that binds small regulatory RNA (sRNAs) and mRNAs to facilitate mRNA translational regulation in response to envelope stress, environmental stress and changes in metabolite concentrations. Also binds with high specificity to tRNAs. The chain is RNA-binding protein Hfq from Hyphomonas neptunium (strain ATCC 15444).